A 315-amino-acid chain; its full sequence is Porphobilinogen deaminase (315 aa).

At Cys-241 the chain carries S-(dipyrrolylmethanemethyl)cysteine.

Belongs to the HMBS family. In terms of assembly, monomer. It depends on dipyrromethane as a cofactor.

The catalysed reaction is 4 porphobilinogen + H2O = hydroxymethylbilane + 4 NH4(+). It functions in the pathway porphyrin-containing compound metabolism; protoporphyrin-IX biosynthesis; coproporphyrinogen-III from 5-aminolevulinate: step 2/4. Its function is as follows. Tetrapolymerization of the monopyrrole PBG into the hydroxymethylbilane pre-uroporphyrinogen in several discrete steps. This chain is Porphobilinogen deaminase, found in Nitratidesulfovibrio vulgaris (strain ATCC 29579 / DSM 644 / CCUG 34227 / NCIMB 8303 / VKM B-1760 / Hildenborough) (Desulfovibrio vulgaris).